Consider the following 35-residue polypeptide: Photosystem II reaction center protein T (35 aa).

A helical transmembrane segment spans residues 3–23 (ALVYTFLLVSTLGIIFFAIFF).

Belongs to the PsbT family. PSII is composed of 1 copy each of membrane proteins PsbA, PsbB, PsbC, PsbD, PsbE, PsbF, PsbH, PsbI, PsbJ, PsbK, PsbL, PsbM, PsbT, PsbY, PsbZ, Psb30/Ycf12, at least 3 peripheral proteins of the oxygen-evolving complex and a large number of cofactors. It forms dimeric complexes.

Its subcellular location is the plastid. It is found in the chloroplast thylakoid membrane. Found at the monomer-monomer interface of the photosystem II (PS II) dimer, plays a role in assembly and dimerization of PSII. PSII is a light-driven water plastoquinone oxidoreductase, using light energy to abstract electrons from H(2)O, generating a proton gradient subsequently used for ATP formation. This Cedrus deodara (Deodar cedar) protein is Photosystem II reaction center protein T.